The sequence spans 593 residues: Ribonuclease Y (593 aa).

The chain crosses the membrane as a helical span at residues 6–26; that stretch reads ILLMYLIVGLLTALTVLIFVF. The KH domain occupies 218–278; it reads DPIKVKKVTD…IKLEVAYNAL (61 aa). An HD domain is found at 354 to 464; sequence VLTHSIEAAQ…TKIADFLSAA (111 aa).

This sequence belongs to the RNase Y family.

The protein resides in the cell membrane. Functionally, endoribonuclease that initiates mRNA decay. This chain is Ribonuclease Y, found in Mycoplasmoides gallisepticum (strain R(low / passage 15 / clone 2)) (Mycoplasma gallisepticum).